A 141-amino-acid polypeptide reads, in one-letter code: Arsenate reductase (141 aa).

The active-site Nucleophile; cysteine thioarsenate intermediate is the C12.

The protein belongs to the ArsC family.

The catalysed reaction is [glutaredoxin]-dithiol + arsenate + glutathione + H(+) = glutathionyl-S-S-[glutaredoxin] + arsenite + H2O. Involved in resistance to arsenate. Catalyzes the reduction of arsenate [As(V)] to arsenite [As(III)]. The sequence is that of Arsenate reductase from Escherichia coli (strain K12).